We begin with the raw amino-acid sequence, 260 residues long: 33 kDa inner dynein arm light chain, axonemal (260 aa).

The tract at residues M1–T66 is disordered. The stretch at M177–K260 forms a coiled coil.

The protein belongs to the inner dynein arm light chain family. Post-translationally, may undergo some post-translational modifications that shift its mobility on SDS gels.

Its function is as follows. May play a dynamic role in flagellar motility. This Strongylocentrotus purpuratus (Purple sea urchin) protein is 33 kDa inner dynein arm light chain, axonemal.